The chain runs to 347 residues: UDP-N-acetylenolpyruvoylglucosamine reductase (347 aa).

Residues alanine 33–aspartate 221 form the FAD-binding PCMH-type domain. Arginine 180 is a catalytic residue. Serine 250 serves as the catalytic Proton donor. The active site involves glutamate 320.

This sequence belongs to the MurB family. Requires FAD as cofactor.

The protein resides in the cytoplasm. The enzyme catalyses UDP-N-acetyl-alpha-D-muramate + NADP(+) = UDP-N-acetyl-3-O-(1-carboxyvinyl)-alpha-D-glucosamine + NADPH + H(+). Its pathway is cell wall biogenesis; peptidoglycan biosynthesis. Cell wall formation. This is UDP-N-acetylenolpyruvoylglucosamine reductase from Nitrosospira multiformis (strain ATCC 25196 / NCIMB 11849 / C 71).